The primary structure comprises 390 residues: L-serine phosphate decarboxylase Cj1436c (390 aa).

Lysine 243 carries the N6-(pyridoxal phosphate)lysine modification.

Belongs to the class-I pyridoxal-phosphate-dependent aminotransferase family. Pyridoxal 5'-phosphate serves as cofactor.

It catalyses the reaction O-phospho-L-serine + H(+) = phosphoethanolamine + CO2. It participates in capsule biogenesis; capsule polysaccharide biosynthesis. In terms of biological role, pyridoxal phosphate (PLP)-dependent decarboxylase involved in the biosynthesis of amidated D-glucuronic acid structures found on the capsular polysaccharide (CPS) of C.jejuni. Catalyzes the decarboxylation of L-serine phosphate to ethanolamine phosphate. Less active with L-threonine phosphate. No activity with L-serine, L-threonine, L-aspartate or L-glutamate. This Campylobacter jejuni subsp. jejuni serotype O:2 (strain ATCC 700819 / NCTC 11168) protein is L-serine phosphate decarboxylase Cj1436c.